Here is a 431-residue protein sequence, read N- to C-terminus: 3-phosphoshikimate 1-carboxyvinyltransferase (431 aa).

3 residues coordinate 3-phosphoshikimate: Lys-22, Ser-23, and Arg-27. Position 22 (Lys-22) interacts with phosphoenolpyruvate. The phosphoenolpyruvate site is built by Gly-94 and Arg-122. Positions 167, 169, 314, and 341 each coordinate 3-phosphoshikimate. Gln-169 is a binding site for phosphoenolpyruvate. Asp-314 acts as the Proton acceptor in catalysis. 2 residues coordinate phosphoenolpyruvate: Arg-345 and Arg-391.

The protein belongs to the EPSP synthase family. In terms of assembly, monomer.

The protein localises to the cytoplasm. The catalysed reaction is 3-phosphoshikimate + phosphoenolpyruvate = 5-O-(1-carboxyvinyl)-3-phosphoshikimate + phosphate. It participates in metabolic intermediate biosynthesis; chorismate biosynthesis; chorismate from D-erythrose 4-phosphate and phosphoenolpyruvate: step 6/7. Functionally, catalyzes the transfer of the enolpyruvyl moiety of phosphoenolpyruvate (PEP) to the 5-hydroxyl of shikimate-3-phosphate (S3P) to produce enolpyruvyl shikimate-3-phosphate and inorganic phosphate. The protein is 3-phosphoshikimate 1-carboxyvinyltransferase of Leuconostoc citreum (strain KM20).